A 117-amino-acid polypeptide reads, in one-letter code: UPF0342 protein lmo2223 (117 aa).

It belongs to the UPF0342 family.

The chain is UPF0342 protein lmo2223 from Listeria monocytogenes serovar 1/2a (strain ATCC BAA-679 / EGD-e).